The primary structure comprises 570 residues: Hydroxylamine reductase (570 aa).

The [4Fe-4S] cluster site is built by Cys-5, Cys-8, Cys-17, and Cys-23. His-266, Glu-290, Cys-334, Cys-425, Cys-453, Cys-478, Glu-513, and Lys-515 together coordinate hybrid [4Fe-2O-2S] cluster. Cys-425 carries the post-translational modification Cysteine persulfide.

It belongs to the HCP family. [4Fe-4S] cluster serves as cofactor. Requires hybrid [4Fe-2O-2S] cluster as cofactor.

Its subcellular location is the cytoplasm. The enzyme catalyses A + NH4(+) + H2O = hydroxylamine + AH2 + H(+). Its function is as follows. Catalyzes the reduction of hydroxylamine to form NH(3) and H(2)O. The polypeptide is Hydroxylamine reductase (Clostridium tetani (strain Massachusetts / E88)).